Here is a 62-residue protein sequence, read N- to C-terminus: UPF0434 protein Smed_3047 (62 aa).

It belongs to the UPF0434 family.

In Sinorhizobium medicae (strain WSM419) (Ensifer medicae), this protein is UPF0434 protein Smed_3047.